Here is a 224-residue protein sequence, read N- to C-terminus: Deoxyribose-phosphate aldolase (224 aa).

D92 serves as the catalytic Proton donor/acceptor. Catalysis depends on K155, which acts as the Schiff-base intermediate with acetaldehyde. K184 acts as the Proton donor/acceptor in catalysis.

It belongs to the DeoC/FbaB aldolase family. DeoC type 1 subfamily.

The protein resides in the cytoplasm. It catalyses the reaction 2-deoxy-D-ribose 5-phosphate = D-glyceraldehyde 3-phosphate + acetaldehyde. Its pathway is carbohydrate degradation; 2-deoxy-D-ribose 1-phosphate degradation; D-glyceraldehyde 3-phosphate and acetaldehyde from 2-deoxy-alpha-D-ribose 1-phosphate: step 2/2. Catalyzes a reversible aldol reaction between acetaldehyde and D-glyceraldehyde 3-phosphate to generate 2-deoxy-D-ribose 5-phosphate. The chain is Deoxyribose-phosphate aldolase from Clostridium perfringens (strain SM101 / Type A).